We begin with the raw amino-acid sequence, 389 residues long: SH2 domain-containing protein 2A (389 aa).

The segment at 41-63 (AASPQAPEAASNTGNAERAEEVP) is disordered. The SH2 domain maps to 95–186 (WFHGFITRRE…PYGETLTEPL (92 aa)). The disordered stretch occupies residues 190-295 (TPEPAGLSLR…PIAFYAMGRG (106 aa)). A compositionally biased stretch (polar residues) spans 203–216 (SNFGSKSQDPNPQY). S217 carries the post-translational modification Phosphoserine. 2 consecutive short sequence motifs (SH3-binding) follow at residues 244–250 (RPKPPIP) and 272–278 (RPKPSNP). Residues 245–256 (PKPPIPAKPQLP) show a composition bias toward pro residues. Residue S296 is modified to Phosphoserine. The tract at residues 324–389 (KSWSRPVPGG…QAWLPLGPPQ (66 aa)) is disordered. Polar residues predominate over residues 337-348 (GGSQLHSENSVI). The segment covering 352–361 (PPLPHQPPPA) has biased composition (pro residues).

In terms of assembly, interacts with KDR. Interacts with TXK and ITK. Phosphorylated on tyrosine residues. As to expression, expression limited to tissues of the immune system and, in particular, activated T-cells. Expressed in peripheral blood leukocytes, thymus and spleen. Much lower expression or undetectable, in brain, placenta, skeletal muscle, prostate, testis, ovary, small intestine, and colon. Expressed at low levels in unstimulated T-cells, but not expressed in normal resting or activated B-cells. According to PubMed:10692392, expression is not restricted to activated T-cells, but strongly expressed in blood cell lineages, the endothelium and other cell and tissue types, such as heart, lung, and liver.

It is found in the cytoplasm. Could be a T-cell-specific adapter protein involved in the control of T-cell activation. May play a role in the CD4-p56-LCK-dependent signal transduction pathway. Could also play an important role in normal and pathological angiogenesis. Could be an adapter protein that facilitates and regulates interaction of KDR with effector proteins important to endothelial cell survival and proliferation. The polypeptide is SH2 domain-containing protein 2A (SH2D2A) (Homo sapiens (Human)).